Here is a 440-residue protein sequence, read N- to C-terminus: ATP-dependent protease ATPase subunit HslU (440 aa).

ATP contacts are provided by residues Ile18, 60–65, Asp252, Glu318, and Arg390; that span reads GVGKTE.

The protein belongs to the ClpX chaperone family. HslU subfamily. As to quaternary structure, a double ring-shaped homohexamer of HslV is capped on each side by a ring-shaped HslU homohexamer. The assembly of the HslU/HslV complex is dependent on binding of ATP.

The protein resides in the cytoplasm. In terms of biological role, ATPase subunit of a proteasome-like degradation complex; this subunit has chaperone activity. The binding of ATP and its subsequent hydrolysis by HslU are essential for unfolding of protein substrates subsequently hydrolyzed by HslV. HslU recognizes the N-terminal part of its protein substrates and unfolds these before they are guided to HslV for hydrolysis. The sequence is that of ATP-dependent protease ATPase subunit HslU from Acidithiobacillus ferrooxidans (strain ATCC 23270 / DSM 14882 / CIP 104768 / NCIMB 8455) (Ferrobacillus ferrooxidans (strain ATCC 23270)).